We begin with the raw amino-acid sequence, 509 residues long: Maturase K (509 aa).

Belongs to the intron maturase 2 family. MatK subfamily.

It localises to the plastid. Its subcellular location is the chloroplast. Its function is as follows. Usually encoded in the trnK tRNA gene intron. Probably assists in splicing its own and other chloroplast group II introns. The protein is Maturase K of Abies firma (Momi fir).